The following is a 291-amino-acid chain: Pantothenate synthetase 1 (291 aa).

His-37 serves as the catalytic Proton donor. Residue 147–150 participates in ATP binding; it reads GEKD. (R)-pantoate is bound at residue Gln-153. ATP is bound at residue 184 to 187; sequence ISSR.

Belongs to the pantothenate synthetase family. In terms of assembly, homodimer.

The protein resides in the cytoplasm. The catalysed reaction is (R)-pantoate + beta-alanine + ATP = (R)-pantothenate + AMP + diphosphate + H(+). Its pathway is cofactor biosynthesis; (R)-pantothenate biosynthesis; (R)-pantothenate from (R)-pantoate and beta-alanine: step 1/1. Catalyzes the condensation of pantoate with beta-alanine in an ATP-dependent reaction via a pantoyl-adenylate intermediate. This is Pantothenate synthetase 1 from Frankia alni (strain DSM 45986 / CECT 9034 / ACN14a).